Consider the following 367-residue polypeptide: Queuine tRNA-ribosyltransferase (367 aa).

The active-site Proton acceptor is aspartate 92. Residues 92 to 96, aspartate 146, glutamine 188, and glycine 215 contribute to the substrate site; that span reads DSGGF. The interval 246–252 is RNA binding; sequence GVGTPKD. Aspartate 265 acts as the Nucleophile in catalysis. 4 residues coordinate Zn(2+): cysteine 303, cysteine 305, cysteine 308, and histidine 334.

This sequence belongs to the queuine tRNA-ribosyltransferase family. As to quaternary structure, homodimer. Within each dimer, one monomer is responsible for RNA recognition and catalysis, while the other monomer binds to the replacement base PreQ1. Requires Zn(2+) as cofactor.

It carries out the reaction 7-aminomethyl-7-carbaguanine + guanosine(34) in tRNA = 7-aminomethyl-7-carbaguanosine(34) in tRNA + guanine. It participates in tRNA modification; tRNA-queuosine biosynthesis. Catalyzes the base-exchange of a guanine (G) residue with the queuine precursor 7-aminomethyl-7-deazaguanine (PreQ1) at position 34 (anticodon wobble position) in tRNAs with GU(N) anticodons (tRNA-Asp, -Asn, -His and -Tyr). Catalysis occurs through a double-displacement mechanism. The nucleophile active site attacks the C1' of nucleotide 34 to detach the guanine base from the RNA, forming a covalent enzyme-RNA intermediate. The proton acceptor active site deprotonates the incoming PreQ1, allowing a nucleophilic attack on the C1' of the ribose to form the product. After dissociation, two additional enzymatic reactions on the tRNA convert PreQ1 to queuine (Q), resulting in the hypermodified nucleoside queuosine (7-(((4,5-cis-dihydroxy-2-cyclopenten-1-yl)amino)methyl)-7-deazaguanosine). The chain is Queuine tRNA-ribosyltransferase from Francisella tularensis subsp. mediasiatica (strain FSC147).